The primary structure comprises 319 residues: Ribonuclease Z (319 aa).

Residues His62, His64, Asp66, His67, His139, Asp210, and His268 each coordinate Zn(2+). The active-site Proton acceptor is Asp66.

Belongs to the RNase Z family. In terms of assembly, homodimer. The cofactor is Zn(2+).

It catalyses the reaction Endonucleolytic cleavage of RNA, removing extra 3' nucleotides from tRNA precursor, generating 3' termini of tRNAs. A 3'-hydroxy group is left at the tRNA terminus and a 5'-phosphoryl group is left at the trailer molecule.. Functionally, zinc phosphodiesterase, which displays some tRNA 3'-processing endonuclease activity. Probably involved in tRNA maturation, by removing a 3'-trailer from precursor tRNA. The protein is Ribonuclease Z of Nostoc punctiforme (strain ATCC 29133 / PCC 73102).